The chain runs to 226 residues: Cobalt transport protein CbiM 2 (226 aa).

The next 6 helical transmembrane spans lie at 6–26 (GFLP…VVAY), 43–63 (MLLG…MPSV), 75–95 (LGAI…VLLF), 107–127 (TLGA…AAVF), 135–155 (FPFG…TYVT), and 181–201 (VFAL…VVVM).

This sequence belongs to the CbiM family. Forms an energy-coupling factor (ECF) transporter complex composed of an ATP-binding protein (A component, CbiO), a transmembrane protein (T component, CbiQ) and 2 possible substrate-capture proteins (S components, CbiM and CbiN) of unknown stoichimetry.

The protein localises to the cell inner membrane. It functions in the pathway cofactor biosynthesis; adenosylcobalamin biosynthesis. In terms of biological role, part of the energy-coupling factor (ECF) transporter complex CbiMNOQ involved in cobalt import. In Pelobacter propionicus (strain DSM 2379 / NBRC 103807 / OttBd1), this protein is Cobalt transport protein CbiM 2.